The primary structure comprises 421 residues: Probable acid phosphatase (421 aa).

The Proton donor role is filled by Asp-229.

The catalysed reaction is a phosphate monoester + H2O = an alcohol + phosphate. The chain is Probable acid phosphatase from Kluyveromyces lactis (strain ATCC 8585 / CBS 2359 / DSM 70799 / NBRC 1267 / NRRL Y-1140 / WM37) (Yeast).